Consider the following 154-residue polypeptide: Myoglobin (154 aa).

Residues 2–148 (GLSDGEWQLV…FRNDIAAKYK (147 aa)) form the Globin domain. Ser-4 carries the phosphoserine modification. Residue His-65 coordinates nitrite. Position 65 (His-65) interacts with O2. The residue at position 68 (Thr-68) is a Phosphothreonine. Heme b is bound at residue His-94.

In terms of assembly, monomer.

It is found in the cytoplasm. The protein resides in the sarcoplasm. The catalysed reaction is Fe(III)-heme b-[protein] + nitric oxide + H2O = Fe(II)-heme b-[protein] + nitrite + 2 H(+). The enzyme catalyses H2O2 + AH2 = A + 2 H2O. In terms of biological role, monomeric heme protein which primary function is to store oxygen and facilitate its diffusion within muscle tissues. Reversibly binds oxygen through a pentacoordinated heme iron and enables its timely and efficient release as needed during periods of heightened demand. Depending on the oxidative conditions of tissues and cells, and in addition to its ability to bind oxygen, it also has a nitrite reductase activity whereby it regulates the production of bioactive nitric oxide. Under stress conditions, like hypoxia and anoxia, it also protects cells against reactive oxygen species thanks to its pseudoperoxidase activity. This chain is Myoglobin, found in Hystrix cristata (North African crested porcupine).